The following is a 906-amino-acid chain: Ankyrin repeat and MYND domain-containing protein 1 (906 aa).

MORN repeat units lie at residues 16-38 (YHGQFYRDHFHGLGTYTWPDGSS), 39-59 (FTGTFYLSQREGYGTMHTKTM), and 61-83 (FQGLYKEDQRFGPGIETYPDGSQ). One copy of the ANK 1 repeat lies at 282 to 311 (KGYTVLAAAAMHSHLDIVNLLLDFGADVNK). The span at 391–400 (SMQTPESSNM) shows a compositional bias: polar residues. Residues 391–411 (SMQTPESSNMLHKEEVSPVKT) form a disordered region. 6 ANK repeats span residues 479–508 (VRKMAQSMVERRNRWMTITLLLRRGADPNL), 511–540 (VPMQALFLAVKAGDVEGVRLLLMSGAQTDI), 547–579 (QSLTPLHIAVSLPGEEGVKITELLLHVITNVDA), 623–657 (GGRTALHVACEREDNKKCARDIVRLLLSHRANPNV), 660–689 (SGHSPLSLAIASGNDLVVKELLSQGADPNL), and 701–732 (VVCDLVYEQQRSVENKIALIDRLISYGADVLN). Residues cysteine 845, cysteine 848, cysteine 859, cysteine 862, cysteine 868, cysteine 872, histidine 881, and cysteine 885 each coordinate Zn(2+). The MYND-type zinc finger occupies 845–885 (CYQCGRSIGVRLSPCPRCYGILTCSKYCKTKAWIEFHKKDC).

This is Ankyrin repeat and MYND domain-containing protein 1 (Ankmy1) from Mus musculus (Mouse).